A 280-amino-acid chain; its full sequence is Lipase chaperone (280 aa).

The chain crosses the membrane as a helical span at residues 5–22; sequence ALTIITIALGSLGAVYFL.

It belongs to the lipase chaperone family.

It localises to the cell inner membrane. In terms of biological role, may be involved in the folding of the extracellular lipase during its passage through the periplasm. The sequence is that of Lipase chaperone (lifO) from Vibrio vulnificus (strain CMCP6).